We begin with the raw amino-acid sequence, 253 residues long: Phosphoadenosine 5'-phosphosulfate reductase (253 aa).

The active-site Nucleophile; cysteine thiosulfonate intermediate is Cys239.

Belongs to the PAPS reductase family. CysH subfamily.

It is found in the cytoplasm. It catalyses the reaction [thioredoxin]-disulfide + sulfite + adenosine 3',5'-bisphosphate + 2 H(+) = [thioredoxin]-dithiol + 3'-phosphoadenylyl sulfate. Its pathway is sulfur metabolism; hydrogen sulfide biosynthesis; sulfite from sulfate: step 3/3. Functionally, catalyzes the formation of sulfite from phosphoadenosine 5'-phosphosulfate (PAPS) using thioredoxin as an electron donor. The polypeptide is Phosphoadenosine 5'-phosphosulfate reductase (Aliivibrio fischeri (strain MJ11) (Vibrio fischeri)).